A 992-amino-acid chain; its full sequence is UPF0182 protein Mb3215c (992 aa).

7 consecutive transmembrane segments (helical) span residues 17 to 39 (RILI…LIDA), 59 to 81 (LATR…FGGL), 113 to 135 (LVGI…SYWA), 169 to 191 (LMLS…AHYI), 212 to 229 (LVSL…AYWL), 255 to 277 (VLPA…FSAI), and 284 to 306 (IPAI…WPLI). The tract at residues 906–938 (PTEAAVPPSPAANPPPPASGPQPPPVTAAPPVP) is disordered. Over residues 912-938 (PPSPAANPPPPASGPQPPPVTAAPPVP) the composition is skewed to pro residues.

This sequence belongs to the UPF0182 family.

It is found in the cell membrane. The polypeptide is UPF0182 protein Mb3215c (Mycobacterium bovis (strain ATCC BAA-935 / AF2122/97)).